The primary structure comprises 253 residues: Spermatogenesis-associated protein 9 (253 aa).

Residues 144–166 (LTSIMCASYAALIYLTVCVNAVL) traverse the membrane as a helical segment. The span at 210–228 (AKPYRSLPEKPDSISDRPK) shows a compositional bias: basic and acidic residues. Residues 210-231 (AKPYRSLPEKPDSISDRPKLPA) are disordered.

It localises to the membrane. In terms of biological role, may play at role in testicular development/spermatogenesis and may be an important factor in male infertility. This Bos taurus (Bovine) protein is Spermatogenesis-associated protein 9 (SPATA9).